Reading from the N-terminus, the 785-residue chain is ATP-dependent 6-phosphofructokinase 1 (785 aa).

Residues 1-389 (MATTHAPAEP…YHFAYKNTAT (389 aa)) are N-terminal catalytic PFK domain 1. Residues G23, 86-87 (RS), and 116-119 (GDGS) contribute to the ATP site. D117 provides a ligand contact to Mg(2+). Substrate contacts are provided by residues 162–164 (SID), R199, 206–208 (MGR), E263, R291, and 297–300 (HTQR). D164 (proton acceptor) is an active-site residue. The interval 390–403 (PDHPKLILPENKRM) is interdomain linker. The segment at 404 to 785 (RIAIIHVGAP…KTGWSCYENC (382 aa)) is C-terminal regulatory PFK domain 2. Beta-D-fructose 2,6-bisphosphate contacts are provided by residues R480, 537-541 (TISNN), R575, 582-584 (QGG), E642, R668, 674-677 (HFQQ), and R749.

It belongs to the phosphofructokinase type A (PFKA) family. ATP-dependent PFK group I subfamily. Eukaryotic two domain clade 'E' sub-subfamily. As to quaternary structure, homotetramer. The cofactor is Mg(2+).

The protein resides in the cytoplasm. It catalyses the reaction beta-D-fructose 6-phosphate + ATP = beta-D-fructose 1,6-bisphosphate + ADP + H(+). The protein operates within carbohydrate degradation; glycolysis; D-glyceraldehyde 3-phosphate and glycerone phosphate from D-glucose: step 3/4. Allosterically activated by ADP, AMP, or fructose 2,6-bisphosphate, and allosterically inhibited by ATP or citrate. Its function is as follows. Catalyzes the phosphorylation of D-fructose 6-phosphate to fructose 1,6-bisphosphate by ATP, the first committing step of glycolysis. In Aspergillus oryzae (strain ATCC 42149 / RIB 40) (Yellow koji mold), this protein is ATP-dependent 6-phosphofructokinase 1 (pfkA).